The chain runs to 601 residues: Deuterosome assembly protein 1 (601 aa).

Coiled coils occupy residues 14 to 59 (CEAE…NAQT), 86 to 197 (TQNY…KQQR), and 226 to 278 (IEKL…LQSR). Disordered regions lie at residues 115–135 (MKQN…PFEL) and 188–213 (QTQL…CESS). Positions 121-131 (HRKEASNKDET) are enriched in basic and acidic residues. The disordered stretch occupies residues 307 to 326 (DNRKRVESSYSPSTKEPERK). Residues 340–397 (HEKELNKMRSQLYQEEDLCSEQERMRNEISELTQELHQKEVTIATIMKKAALLERQLK) are a coiled coil. A Phosphoserine modification is found at Ser-544. A coiled-coil region spans residues 555–586 (AAQHFLMEEEKRAKELEKLLNTHIDELQRHTE).

Belongs to the CEP63 family. In terms of assembly, interacts with CEP152; the interaction is mutually exclusive with CEP63.

Its subcellular location is the cytoplasm. In terms of biological role, key structural component of the deuterosome, a structure that promotes de novo centriole amplification in multiciliated cells. Deuterosome-mediated centriole amplification occurs in terminally differentiated multiciliated cells and can generate more than 100 centrioles. Probably sufficient for the specification and formation of the deuterosome inner core. Interacts with CEP152 and recruits PLK4 to activate centriole biogenesis. This chain is Deuterosome assembly protein 1, found in Rattus norvegicus (Rat).